A 303-amino-acid chain; its full sequence is Putative AraC-like transcription regulator (303 aa).

Residues 202-300 (ASALTFLHRD…GMNPGDYRKH (99 aa)) form the HTH araC/xylS-type domain. 2 consecutive DNA-binding regions (H-T-H motif) follow at residues 219-240 (AELASAAAVSRSTLAARFKATV) and 267-290 (LAAIAHSVGYGSESALSVAFKRVL).

This chain is Putative AraC-like transcription regulator, found in Streptomyces antibioticus.